The sequence spans 283 residues: Protease HtpX (283 aa).

2 helical membrane-spanning segments follow: residues I4–V24 and G33–L53. H139 contributes to the Zn(2+) binding site. Residue E140 is part of the active site. H143 contacts Zn(2+). The next 2 membrane-spanning stretches (helical) occupy residues G147 to S167 and I190 to A210. E218 contacts Zn(2+).

The protein belongs to the peptidase M48B family. The cofactor is Zn(2+).

Its subcellular location is the cell inner membrane. The sequence is that of Protease HtpX from Haemophilus influenzae (strain PittGG).